We begin with the raw amino-acid sequence, 312 residues long: uncharacterized protein (312 aa).

Belongs to the asfivirus CP312R family.

Its subcellular location is the virion. This is an uncharacterized protein from African swine fever virus (isolate Warthog/Namibia/Wart80/1980) (ASFV).